A 132-amino-acid chain; its full sequence is Large ribosomal subunit protein bL19 (132 aa).

It belongs to the bacterial ribosomal protein bL19 family.

This protein is located at the 30S-50S ribosomal subunit interface and may play a role in the structure and function of the aminoacyl-tRNA binding site. This is Large ribosomal subunit protein bL19 from Rhodospirillum centenum (strain ATCC 51521 / SW).